The sequence spans 31 residues: MSLFIGYIIFLVAFFGLATGLFLGLKAIKLI.

The helical transmembrane segment at 3-23 threads the bilayer; it reads LFIGYIIFLVAFFGLATGLFL.

It belongs to the PetL family. In terms of assembly, the 4 large subunits of the cytochrome b6-f complex are cytochrome b6, subunit IV (17 kDa polypeptide, PetD), cytochrome f and the Rieske protein, while the 4 small subunits are PetG, PetL, PetM and PetN. The complex functions as a dimer.

Its subcellular location is the plastid. It is found in the chloroplast thylakoid membrane. Functionally, component of the cytochrome b6-f complex, which mediates electron transfer between photosystem II (PSII) and photosystem I (PSI), cyclic electron flow around PSI, and state transitions. PetL is important for photoautotrophic growth as well as for electron transfer efficiency and stability of the cytochrome b6-f complex. This chain is Cytochrome b6-f complex subunit 6, found in Porphyra purpurea (Red seaweed).